The sequence spans 521 residues: Cytochrome P450 1A1 (521 aa).

Substrate is bound at residue Phe229. Cys463 is a binding site for heme.

Belongs to the cytochrome P450 family. The cofactor is heme.

It localises to the endoplasmic reticulum membrane. Its subcellular location is the microsome membrane. It carries out the reaction an organic molecule + reduced [NADPH--hemoprotein reductase] + O2 = an alcohol + oxidized [NADPH--hemoprotein reductase] + H2O + H(+). Its function is as follows. Cytochromes P450 are a group of heme-thiolate monooxygenases. They oxidize a variety of structurally unrelated compounds, including steroids, fatty acids, and xenobiotics. This Pleuronectes platessa (European plaice) protein is Cytochrome P450 1A1 (cyp1a1).